A 419-amino-acid chain; its full sequence is DNA-directed RNA polymerase I subunit RPA49 (419 aa).

2 positions are modified to phosphoserine: serine 35 and serine 163. N6-acetyllysine is present on lysine 373. Positions 397-419 (GTLSLPLPPAQTSDRLAKRRKIT) are disordered.

Belongs to the eukaryotic RPA49/POLR1E RNA polymerase subunit family. As to quaternary structure, component of the RNA polymerase I (Pol I) complex consisting of 13 subunits: a ten-subunit catalytic core composed of POLR1A/RPA1, POLR1B/RPA2, POLR1C/RPAC1, POLR1D/RPAC2, POLR1H/RPA12, POLR2E/RPABC1, POLR2F/RPABC2, POLR2H/RPABC3, POLR2K/RPABC4 and POLR2L/RPABC5; a mobile stalk subunit POLR1F/RPA43 protruding from the core and additional subunits homologous to general transcription factors POLR1E/RPA49 and POLR1G/RPA34. Forms a heterodimer with POLR1G/RPA34. Interacts with POLR1G. Also binds UBTF/UBF. Interacts with PWP1. Acetylated at Lys-373 by CREBBP/CBP, leading to decreased RNA polymerase I transcription. In normal conditions, deacetylated by SIRT7, promoting the association of RNA polymerase I with the rDNA promoter region and coding region. In response to stress, SIRT7 is released from nucleoli leading to hyperacetylation of POLR1E/PAF53 and decreased association of RNA polymerase I with the rDNA promoter region.

Its subcellular location is the nucleus. The protein localises to the nucleolus. Functionally, component of RNA polymerase I (Pol I), a DNA-dependent RNA polymerase which synthesizes ribosomal RNA precursors using the four ribonucleoside triphosphates as substrates. Appears to be involved in the formation of the initiation complex at the promoter by mediating the interaction between Pol I and UBTF/UBF. This chain is DNA-directed RNA polymerase I subunit RPA49 (POLR1E), found in Homo sapiens (Human).